A 360-amino-acid chain; its full sequence is Putative agmatine deiminase (360 aa).

The active-site Amidino-cysteine intermediate is the Cys353.

This sequence belongs to the agmatine deiminase family.

It carries out the reaction agmatine + H2O = N-carbamoylputrescine + NH4(+). The sequence is that of Putative agmatine deiminase from Vibrio parahaemolyticus serotype O3:K6 (strain RIMD 2210633).